Consider the following 128-residue polypeptide: uncharacterized protein (128 aa).

2 helical membrane-spanning segments follow: residues 33-53 (LLYI…VCYV) and 61-81 (FFCW…VIIY). Polar residues predominate over residues 99-120 (DSLNQNVGESQSNEPPKYTSTF). A disordered region spans residues 99–128 (DSLNQNVGESQSNEPPKYTSTFMDELDKQD).

Its subcellular location is the membrane. This is an uncharacterized protein from Schizosaccharomyces pombe (strain 972 / ATCC 24843) (Fission yeast).